The following is a 72-amino-acid chain: Translation initiation factor IF-1 (72 aa).

Positions 1–72 constitute an S1-like domain; sequence MPKEEVLEFP…TKGRITYRFK (72 aa).

The protein belongs to the IF-1 family. In terms of assembly, component of the 30S ribosomal translation pre-initiation complex which assembles on the 30S ribosome in the order IF-2 and IF-3, IF-1 and N-formylmethionyl-tRNA(fMet); mRNA recruitment can occur at any time during PIC assembly.

Its subcellular location is the cytoplasm. In terms of biological role, one of the essential components for the initiation of protein synthesis. Stabilizes the binding of IF-2 and IF-3 on the 30S subunit to which N-formylmethionyl-tRNA(fMet) subsequently binds. Helps modulate mRNA selection, yielding the 30S pre-initiation complex (PIC). Upon addition of the 50S ribosomal subunit IF-1, IF-2 and IF-3 are released leaving the mature 70S translation initiation complex. The protein is Translation initiation factor IF-1 of Rhizobium etli (strain ATCC 51251 / DSM 11541 / JCM 21823 / NBRC 15573 / CFN 42).